Here is a 387-residue protein sequence, read N- to C-terminus: uncharacterized protein (387 aa).

The protein resides in the mitochondrion. This is an uncharacterized protein from Paramecium tetraurelia.